Consider the following 368-residue polypeptide: uncharacterized protein (368 aa).

It belongs to the CdaR family.

This is an uncharacterized protein from Bacillus subtilis (strain 168).